Consider the following 969-residue polypeptide: RNA polymerase-associated protein RapA (969 aa).

The Helicase ATP-binding domain occupies 164–334; the sequence is EVGRRYAPRV…FARLRLLDPD (171 aa). 177 to 184 contributes to the ATP binding site; that stretch reads DEVGLGKT. A DEAH box motif is present at residues 280 to 283; the sequence is DEAH. The region spanning 492-668 is the Helicase C-terminal domain; it reads RVNWLLELLK…GKSDGLESLI (177 aa).

This sequence belongs to the SNF2/RAD54 helicase family. RapA subfamily. In terms of assembly, interacts with the RNAP. Has a higher affinity for the core RNAP than for the holoenzyme. Its ATPase activity is stimulated by binding to RNAP.

Its function is as follows. Transcription regulator that activates transcription by stimulating RNA polymerase (RNAP) recycling in case of stress conditions such as supercoiled DNA or high salt concentrations. Probably acts by releasing the RNAP, when it is trapped or immobilized on tightly supercoiled DNA. Does not activate transcription on linear DNA. Probably not involved in DNA repair. In Aliivibrio fischeri (strain MJ11) (Vibrio fischeri), this protein is RNA polymerase-associated protein RapA.